Consider the following 646-residue polypeptide: Protein kinase YegI (646 aa).

A Protein kinase domain is found at 13-300 (VTPGRELGKG…KAWVAALDLL (288 aa)). Residues 19–27 (LGKGGEGAV) and K39 each bind ATP. D141 acts as the Proton acceptor in catalysis.

Autophosphorylated.

Probable serine/threonine kinase. This chain is Protein kinase YegI (yegI), found in Escherichia coli O157:H7.